Reading from the N-terminus, the 180-residue chain is Meiotic recombination protein rec15 (180 aa).

Homomer. Interacts (via C-terminus) with hop1 (via C-terminus); the interaction is direct. Interacts (via C-terminus) with rec10; the interaction is direct. Interacts with mde2; the interaction is direct.

It localises to the nucleus. It is found in the chromosome. Functionally, required during the early stages of meiosis for meiotic recombination. The chain is Meiotic recombination protein rec15 from Schizosaccharomyces pombe (strain 972 / ATCC 24843) (Fission yeast).